Reading from the N-terminus, the 245-residue chain is tRNA1(Val) (adenine(37)-N6)-methyltransferase (245 aa).

The protein belongs to the methyltransferase superfamily. tRNA (adenine-N(6)-)-methyltransferase family.

The protein resides in the cytoplasm. It carries out the reaction adenosine(37) in tRNA1(Val) + S-adenosyl-L-methionine = N(6)-methyladenosine(37) in tRNA1(Val) + S-adenosyl-L-homocysteine + H(+). Its function is as follows. Specifically methylates the adenine in position 37 of tRNA(1)(Val) (anticodon cmo5UAC). In Citrobacter koseri (strain ATCC BAA-895 / CDC 4225-83 / SGSC4696), this protein is tRNA1(Val) (adenine(37)-N6)-methyltransferase.